The following is a 345-amino-acid chain: Heat-inducible transcription repressor HrcA (345 aa).

Belongs to the HrcA family.

Negative regulator of class I heat shock genes (grpE-dnaK-dnaJ and groELS operons). Prevents heat-shock induction of these operons. This Dehalococcoides mccartyi (strain ATCC BAA-2266 / KCTC 15142 / 195) (Dehalococcoides ethenogenes (strain 195)) protein is Heat-inducible transcription repressor HrcA.